Consider the following 131-residue polypeptide: Universal stress protein C (131 aa).

Belongs to the universal stress protein A family.

The protein localises to the cytoplasm. Required for resistance to DNA-damaging agents. This chain is Universal stress protein C (uspC), found in Salmonella typhi.